Here is a 216-residue protein sequence, read N- to C-terminus: Glutathione S-transferase 1, isoform B (216 aa).

Positions Met-1–Cys-80 constitute a GST N-terminal domain. Residues Ser-9, His-50–Val-52, and Glu-64–Arg-66 contribute to the glutathione site. Residues Asp-89–Phe-210 enclose the GST C-terminal domain.

This sequence belongs to the GST superfamily. Theta family. Homodimer.

It carries out the reaction RX + glutathione = an S-substituted glutathione + a halide anion + H(+). Its function is as follows. Conjugation of reduced glutathione to a wide number of exogenous and endogenous hydrophobic electrophiles. This Anopheles gambiae (African malaria mosquito) protein is Glutathione S-transferase 1, isoform B.